The primary structure comprises 410 residues: Cytochrome P450(BM-1) (410 aa).

Position 356 (cysteine 356) interacts with heme.

The protein belongs to the cytochrome P450 family. The cofactor is heme.

Its subcellular location is the cytoplasm. In terms of biological role, cytochromes P450 are a group of heme-thiolate monooxygenases. They oxidize a variety of structurally unrelated compounds, including steroids, fatty acids, and xenobiotics. This Priestia megaterium (strain ATCC 14581 / DSM 32 / CCUG 1817 / JCM 2506 / NBRC 15308 / NCIMB 9376 / NCTC 10342 / NRRL B-14308 / VKM B-512 / Ford 19) (Bacillus megaterium) protein is Cytochrome P450(BM-1) (cyp106).